The chain runs to 236 residues: Rab-like protein 3 (236 aa).

The interval 1–236 is small GTPase-like; it reads MASLDRVKVL…GGTLKSLHYD (236 aa). GTP contacts are provided by residues 16 to 21, 148 to 150, and 179 to 180; these read GVGKSS, KLD, and DC.

This sequence belongs to the small GTPase superfamily. Rab family. As to quaternary structure, homodimer. Interacts with GPR89; the interaction stabilizes GPR89. Interacts with RAP1GDS1.

Functionally, required for KRAS signaling regulation and modulation of cell proliferation. Regulator of KRAS prenylation, and probably prenylation of other small GTPases. Required for lymphocyte development and function. Not required for myeloid cell development. This chain is Rab-like protein 3 (RABL3), found in Bos taurus (Bovine).